The sequence spans 538 residues: MSKIIEYDETARRAIEAGVNTLADAVRVTLGPRGRHVVLAKAFGGPAVTNDGVTVAREIDLEDPFENLGAQLVKSVATKTNDVAGDGTTTATVLAQALVKGGLRLVAAGANPIELGAGISKAADAVSEALLASATTVSGKDAIAQVATVSSRDQVLGELVGEAMTKVGVDGVVSVEESSTLNTELEFTEGVGFDKGFLSAYFVTDFDAQQAVLDDPVILLHQEKISSLPDLLPMLEKVAESGKPLLIIAEDIEGEALATLVVNSIRKTLKAVAVKAPFFGDRRKAFLEDLAIVTGGQVINPDTGLLLREVGTEVLGSARRVVVSKDDTIIVDGGGAKDAVANRIKQLRAEIEKTDSDWDREKLQERLAKLAGGVAVIKVGAATETALKERKESVEDAVAAAKAAVEEGIVAGGGSALLQARKALDELRGSLSGDQALGVDVFAEALGAPLYWIASNAGLDGAVAVHKVAELPAGHGLNAEKLSYGDLIADGVIDPVKVTRSAVLNSASVARMVLTTETAVVDKPAEEADDHGHGHHHH.

Residues 29–32 (TLGP), 86–90 (DGTTT), G413, and D494 contribute to the ATP site.

The protein belongs to the chaperonin (HSP60) family. In terms of assembly, forms a cylinder of 14 subunits composed of two heptameric rings stacked back-to-back. Interacts with the co-chaperonin GroES.

The protein resides in the cytoplasm. It catalyses the reaction ATP + H2O + a folded polypeptide = ADP + phosphate + an unfolded polypeptide.. Functionally, together with its co-chaperonin GroES, plays an essential role in assisting protein folding. The GroEL-GroES system forms a nano-cage that allows encapsulation of the non-native substrate proteins and provides a physical environment optimized to promote and accelerate protein folding. This Mycobacterium avium (strain 104) protein is Chaperonin GroEL 1.